The following is a 404-amino-acid chain: MKLPIYLDYAATTPVDPRVAEKMMQCMTMDGIFGNPASRSHRYGWQAEEAVDIARNQIAELINADPREIVFTSGATESDNLAIKGVAHFYQKKGKHIITSKTEHKAVLDTCRQLEREGYEVTYLQPEANGLIPVAMIEAAMREDTLLVSIMQVNNEIGVIQDIDAIGELCRSRKIVFHVDAAQSAGKMPIDVQKTKVDLMSISAHKMYGPKGIGALYVSRKPRIRLEAAMHGGGHERGMRSGTLATHQIVGFGEAAAIAKTDMDSDNERIRRLRDKLWNGINHIEETYINGDMEQRHCGSLNVSFNFVEGESLMMALKDLAVSSGSACTSASLEPSYVLRALGLNDEMAHSSIRFSIGRFTTDEEIEHAIETITESIGNLREMSPLWEMFKDGIDLDSVQWAHH.

Residues Ala75–Thr76, Asn155, Gln183, and Ser203–His205 contribute to the pyridoxal 5'-phosphate site. Lys206 is modified (N6-(pyridoxal phosphate)lysine). A pyridoxal 5'-phosphate-binding site is contributed by Thr243. Cys328 serves as the catalytic Cysteine persulfide intermediate. Cys328 is a [2Fe-2S] cluster binding site.

Belongs to the class-V pyridoxal-phosphate-dependent aminotransferase family. NifS/IscS subfamily. In terms of assembly, homodimer. Forms a heterotetramer with IscU, interacts with other sulfur acceptors. The cofactor is pyridoxal 5'-phosphate.

The protein resides in the cytoplasm. The enzyme catalyses (sulfur carrier)-H + L-cysteine = (sulfur carrier)-SH + L-alanine. The protein operates within cofactor biosynthesis; iron-sulfur cluster biosynthesis. Its function is as follows. Master enzyme that delivers sulfur to a number of partners involved in Fe-S cluster assembly, tRNA modification or cofactor biosynthesis. Catalyzes the removal of elemental sulfur atoms from cysteine to produce alanine. Functions as a sulfur delivery protein for Fe-S cluster synthesis onto IscU, an Fe-S scaffold assembly protein, as well as other S acceptor proteins. The polypeptide is Cysteine desulfurase IscS (Shewanella piezotolerans (strain WP3 / JCM 13877)).